A 1488-amino-acid polypeptide reads, in one-letter code: Chromosome partition protein MukB (1488 aa).

Residue 34 to 41 (GGNGAGKS) participates in ATP binding. Coiled coils occupy residues 326–418 (LEAD…QYNQ), 444–472 (LDTFQAKEQEATEKLLSLEQKMSVAQTAH), and 509–602 (RHLA…QRAP). Positions 666-783 (PGGAEDQRLN…SLPIFGRAAR (118 aa)) are flexible hinge. Coiled-coil stretches lie at residues 835–923 (EAEI…AKLE), 977–1116 (EMLS…AKAG), and 1209–1265 (VEAI…LQSV). The interval 1049-1074 (ADSGAEERARQRRDELHAQLSNNRSR) is disordered. The span at 1051 to 1065 (SGAEERARQRRDELH) shows a compositional bias: basic and acidic residues.

This sequence belongs to the SMC family. MukB subfamily. In terms of assembly, homodimerization via its hinge domain. Binds to DNA via its C-terminal region. Interacts, and probably forms a ternary complex, with MukE and MukF via its C-terminal region. The complex formation is stimulated by calcium or magnesium. Interacts with tubulin-related protein FtsZ.

Its subcellular location is the cytoplasm. The protein resides in the nucleoid. Functionally, plays a central role in chromosome condensation, segregation and cell cycle progression. Functions as a homodimer, which is essential for chromosome partition. Involved in negative DNA supercoiling in vivo, and by this means organize and compact chromosomes. May achieve or facilitate chromosome segregation by condensation DNA from both sides of a centrally located replisome during cell division. The protein is Chromosome partition protein MukB of Salmonella paratyphi A (strain ATCC 9150 / SARB42).